Reading from the N-terminus, the 522-residue chain is GMP synthase [glutamine-hydrolyzing] (522 aa).

The region spanning 8-204 is the Glutamine amidotransferase type-1 domain; that stretch reads RLLIIDFGSQ…FVRLAGFKGD (197 aa). The active-site Nucleophile is Cys86. Catalysis depends on residues His179 and Glu181. The GMPS ATP-PPase domain maps to 205-397; sequence WTMGAYREEA…LGLPASFIGR (193 aa). Residue 232–238 participates in ATP binding; it reads SGGVDSS.

As to quaternary structure, homodimer.

The catalysed reaction is XMP + L-glutamine + ATP + H2O = GMP + L-glutamate + AMP + diphosphate + 2 H(+). The protein operates within purine metabolism; GMP biosynthesis; GMP from XMP (L-Gln route): step 1/1. In terms of biological role, catalyzes the synthesis of GMP from XMP. This chain is GMP synthase [glutamine-hydrolyzing], found in Roseobacter denitrificans (strain ATCC 33942 / OCh 114) (Erythrobacter sp. (strain OCh 114)).